Consider the following 81-residue polypeptide: Putative membrane protein insertion efficiency factor (81 aa).

The tract at residues 59-81 (PWNPGGYDPVPPIKTSRSSSMAE) is disordered.

Belongs to the UPF0161 family.

The protein resides in the cell inner membrane. Its function is as follows. Could be involved in insertion of integral membrane proteins into the membrane. This is Putative membrane protein insertion efficiency factor from Azotobacter vinelandii (strain DJ / ATCC BAA-1303).